Reading from the N-terminus, the 554-residue chain is Hedycaryol synthase (554 aa).

Positions 270, 307, 311, 449, and 452 each coordinate (2E,6E)-farnesyl diphosphate. Positions 307 and 311 each coordinate Mg(2+). The DDXXD motif motif lies at 307–311 (DDTYD). Mg(2+)-binding residues include Asp-452, Ser-456, and Glu-460.

This sequence belongs to the terpene synthase family. Mg(2+) is required as a cofactor. As to expression, specifically expressed in flowers.

It catalyses the reaction (2E,6E)-farnesyl diphosphate + H2O = (2E,6E)-hedycaryol + diphosphate. Its pathway is secondary metabolite biosynthesis; terpenoid biosynthesis. Functionally, sesquiterpene synthase that catalyzes the formation of sesquiterpenes and sesquiterpenoid alcohols. Converts farnesyl diphosphate (FPP) to hedycaryol. Hedycaryol is likely to be one of the terpenes that attract insects for pollination of Camellia brevistyla. In Camellia brevistyla, this protein is Hedycaryol synthase.